The primary structure comprises 445 residues: Rab GDP dissociation inhibitor beta (445 aa).

The residue at position 1 (Met1) is an N-acetylmethionine. Position 112 is an N6-acetyllysine (Lys112). Ser130 is subject to Phosphoserine. The residue at position 269 (Lys269) is an N6-acetyllysine. Phosphoserine is present on Ser382.

Belongs to the Rab GDI family. In terms of assembly, interacts with RHOH. Interacts with the GDP-bound inactive forms of RAB3A, RAB3B, RAB3C, RAB5A, RAB5B, RAB5C, RAB8A, RAB8B, RAB10, RAB12, RAB35, and RAB43; binds RAB3D to a lesser extent. Interacts with DZIP1; this interaction negatively regulates the interaction of GDI2 with GDP-bound RAB8A.

The protein resides in the cytoplasm. The protein localises to the membrane. It localises to the golgi apparatus. It is found in the trans-Golgi network. Its function is as follows. GDP-dissociation inhibitor preventing the GDP to GTP exchange of most Rab proteins. By keeping these small GTPases in their inactive GDP-bound form regulates intracellular membrane trafficking. Negatively regulates protein transport to the cilium and ciliogenesis through the inhibition of RAB8A. This is Rab GDP dissociation inhibitor beta (GDI2) from Sus scrofa (Pig).